A 36-amino-acid chain; its full sequence is Tddefensin (36 aa).

Intrachain disulfides connect Cys-3/Cys-24, Cys-10/Cys-32, and Cys-14/Cys-34.

Belongs to the invertebrate defensin family. Expressed by the venom gland.

The protein resides in the secreted. Its function is as follows. Antibacterial peptide mostly active against Gram-positive bacteria. This chain is Tddefensin, found in Tityus discrepans (Venezuelan scorpion).